The primary structure comprises 380 residues: GATOR1 complex protein NPRL2 (380 aa).

Residues 1–133 (MGSGCRIECI…SKQKLVPIMT (133 aa)) form an interaction with PDPK1 region. Arg78 is a binding site for GDP. The residue at position 78 (Arg78) is an Asymmetric dimethylarginine. Residues Lys158 and Lys357 each participate in a glycyl lysine isopeptide (Lys-Gly) (interchain with G-Cter in ubiquitin) cross-link.

This sequence belongs to the NPR2 family. As to quaternary structure, within the GATOR complex, component of the GATOR1 subcomplex, made of DEPDC5, NPRL2 and NPRL3. GATOR1 mediates the strong interaction of the GATOR complex with small GTPases Rag (RagA/RRAGA, RagB/RRAGB, RagC/RRAGC and/or RagD/RRAGD) heterodimers. GATOR1 interacts with GPR155/LYCHOS; interaction takes place in presence of cholesterol and prevents interaction between GATOR1 and KICSTOR. Interacts with PDPK1. In terms of processing, in the presence of abundant amino acids, ubiquitinated at Lys-158 and Lys-357 via 'Lys-6'-linked ubiquitination by the WDR24 component of the GATOR2 complex, thereby inhibiting the GATOR1 complex and promoting mTORC1 activation. Asymmetric dimethylation at Arg-78 by PRMT1 inhibits the GTPase activator activity of the GATOR1 complex and consequently inducing timely mTORC1 activation under methionine-sufficient conditions. Most abundant in skeletal muscle, followed by brain, liver and pancreas, with lower amounts in lung, kidney, placenta and heart. Expressed in the frontal lobe cortex as well as in the temporal, parietal, and occipital lobes. Expressed in most lung cancer cell lines tested.

It is found in the lysosome membrane. Catalytic component of the GATOR1 complex, a multiprotein complex that functions as an inhibitor of the amino acid-sensing branch of the mTORC1 pathway. In response to amino acid depletion, the GATOR1 complex has GTPase activating protein (GAP) activity and strongly increases GTP hydrolysis by RagA/RRAGA (or RagB/RRAGB) within heterodimeric Rag complexes, thereby turning them into their inactive GDP-bound form, releasing mTORC1 from lysosomal surface and inhibiting mTORC1 signaling. In the presence of abundant amino acids, the GATOR1 complex is ubiquitinated and inhibited by GATOR2. Within the GATOR1 complex, NPRL2 constitutes the catalytic subunit that mediates the GTPase activator activity and under methionine-sufficient conditions, the GTPase activator activity is inhibited by PRMT1 through methylation and consequently inducing timely mTORC1 activation. Functionally, suppresses Src-dependent tyrosine phosphorylation and activation of PDPK1 and its downstream signaling. Down-regulates PDPK1 kinase activity by interfering with tyrosine phosphorylation at 'Tyr-9', 'Tyr-373' and 'Tyr-376' residues. May act as a tumor suppressor. Suppresses cell growth and enhances sensitivity to various anticancer drugs. The polypeptide is GATOR1 complex protein NPRL2 (Homo sapiens (Human)).